The chain runs to 847 residues: Leucine--tRNA ligase (847 aa).

The 'HIGH' region motif lies at 41-51 (PYPSGRIHMGH). The 'KMSKS' region motif lies at 619–623 (KMSKS). Lys-622 contributes to the ATP binding site.

It belongs to the class-I aminoacyl-tRNA synthetase family.

The protein resides in the cytoplasm. It carries out the reaction tRNA(Leu) + L-leucine + ATP = L-leucyl-tRNA(Leu) + AMP + diphosphate. This Cereibacter sphaeroides (strain ATCC 17029 / ATH 2.4.9) (Rhodobacter sphaeroides) protein is Leucine--tRNA ligase.